A 978-amino-acid chain; its full sequence is Sensor histidine kinase TodS (978 aa).

One can recognise a PAS 1 domain in the interval 32–103 (CEEHARIIFD…TQKRLVETAS (72 aa)). A PAC 1 domain is found at 108–162 (VRCDVEILGKSGGREVIAVDFSLLPICNEEGSIVYLLAEGRNITDKKKAEAMLAL). Positions 187–405 (KVSHELRTPL…LFQVKLPLNA (219 aa)) constitute a Histidine kinase 1 domain. At histidine 190 the chain carries Phosphohistidine; by autocatalysis. The Response regulatory domain occupies 452-567 (RVLIVEDNPD…ELRARVSNLV (116 aa)). Residue aspartate 500 is modified to 4-aspartylphosphate. In terms of domain architecture, PAS 2 spans 611 to 681 (SEARWKAVYE…QRLANLLQGG (71 aa)). The region spanning 685–737 (YSVERSYLCKNGSTIWANASVSLMPQRVGESPVILQIIDDITEKKQAQENLNQ) is the PAC 2 domain. The region spanning 757–974 (YIAHEINQPL…CFLVSIPARQ (218 aa)) is the Histidine kinase 2 domain. At histidine 760 the chain carries Phosphohistidine.

As to quaternary structure, homodimer. Binds as a dimer to a pseudopalindromic sequence. Post-translationally, autophosphorylated. Activation requires a sequential transfer of a phosphate group from a His in the primary transmitter domain, to an Asp in the receiver domain and to a His in the secondary transmitter domain.

Its subcellular location is the cytoplasm. It catalyses the reaction ATP + protein L-histidine = ADP + protein N-phospho-L-histidine.. Functionally, member of the two-component regulatory system TodS/TodT involved in the regulation of toluene degradation. Phosphorylates TodT via a four-step phosphorelay in response to toluene. In Pseudomonas putida (strain ATCC 700007 / DSM 6899 / JCM 31910 / BCRC 17059 / LMG 24140 / F1), this protein is Sensor histidine kinase TodS (todS).